The chain runs to 454 residues: Metacaspase-1A (454 aa).

Over residues 1-16 the composition is skewed to gly residues; sequence MSYGYPGQGYGPGGGH. Residues 1–129 form a disordered region; it reads MSYGYPGQGY…GHQTRNQGSH (129 aa). Composition is skewed to low complexity over residues 38 to 47, 59 to 80, 88 to 101, and 109 to 120; these read YSNPGQGQYN, YHQQ…YPPQ, GQQQ…HSQR, and GYDIYGYPIGSG. Active-site residues include His244 and Cys300.

The protein belongs to the peptidase C14B family.

Functionally, involved in cell death (apoptosis). This chain is Metacaspase-1A (casA), found in Neurospora crassa (strain ATCC 24698 / 74-OR23-1A / CBS 708.71 / DSM 1257 / FGSC 987).